Here is a 316-residue protein sequence, read N- to C-terminus: Probable 5-dehydro-4-deoxyglucarate dehydratase 1 (316 aa).

Belongs to the DapA family.

The catalysed reaction is 5-dehydro-4-deoxy-D-glucarate + H(+) = 2,5-dioxopentanoate + CO2 + H2O. It functions in the pathway carbohydrate acid metabolism; D-glucarate degradation; 2,5-dioxopentanoate from D-glucarate: step 2/2. This Streptomyces coelicolor (strain ATCC BAA-471 / A3(2) / M145) protein is Probable 5-dehydro-4-deoxyglucarate dehydratase 1.